Consider the following 448-residue polypeptide: Methylenetetrahydrofolate--tRNA-(uracil-5-)-methyltransferase TrmFO (448 aa).

10-15 (GAGLAG) is an FAD binding site.

Belongs to the MnmG family. TrmFO subfamily. FAD serves as cofactor.

It localises to the cytoplasm. The catalysed reaction is uridine(54) in tRNA + (6R)-5,10-methylene-5,6,7,8-tetrahydrofolate + NADH + H(+) = 5-methyluridine(54) in tRNA + (6S)-5,6,7,8-tetrahydrofolate + NAD(+). It carries out the reaction uridine(54) in tRNA + (6R)-5,10-methylene-5,6,7,8-tetrahydrofolate + NADPH + H(+) = 5-methyluridine(54) in tRNA + (6S)-5,6,7,8-tetrahydrofolate + NADP(+). In terms of biological role, catalyzes the folate-dependent formation of 5-methyl-uridine at position 54 (M-5-U54) in all tRNAs. The chain is Methylenetetrahydrofolate--tRNA-(uracil-5-)-methyltransferase TrmFO from Lactococcus lactis subsp. cremoris (strain SK11).